Here is a 116-residue protein sequence, read N- to C-terminus: Spexin (116 aa).

A signal peptide spans 1 to 26; that stretch reads MKGLRSLAATTLALFLVFVFLGNSSC. The propeptide occupies 27 to 35; the sequence is APQRLLERR. Glutamine amide is present on Q49. 2 consecutive propeptides follow at residues 50-116 and 74-116; these read GRRF…LLNW and PNPQ…LLNW. Over residues 55-73 the composition is skewed to basic and acidic residues; the sequence is SDQSRRKDLSDRPLPERRS. The disordered stretch occupies residues 55–77; it reads SDQSRRKDLSDRPLPERRSPNPQ.

It belongs to the spexin family. As to expression, expressed in the type I glomic cells within the carotid body (at protein level). Expressed predominantly in pancreas, testis, kidney, brain and placenta. Expressed in submucosal layer of esophagus and stomach fundus.

It localises to the secreted. Its subcellular location is the extracellular space. The protein localises to the cytoplasmic vesicle. It is found in the secretory vesicle. Plays a role as a central modulator of cardiovascular and renal function and nociception. Also plays a role in energy metabolism and storage. Inhibits adrenocortical cell proliferation with minor stimulation on corticosteroid release. In terms of biological role, acts as a ligand for galanin receptors GALR2 and GALR3. Intracerebroventricular administration of the peptide induces an increase in arterial blood pressure, a decrease in both heart rate and renal excretion and delayed natriuresis. Intraventricular administration of the peptide induces antinociceptive activity. Also induces contraction of muscarinic-like stomach smooth muscles. Intraperitoneal administration of the peptide induces a reduction in food consumption and body weight. Inhibits long chain fatty acid uptake into adipocytes. Its function is as follows. Intracerebroventricular administration of the peptide induces a decrease in heart rate, but no change in arterial pressure, and an increase in urine flow rate. Intraventricular administration of the peptide induces antinociceptive activity. The chain is Spexin (SPX) from Homo sapiens (Human).